A 365-amino-acid polypeptide reads, in one-letter code: Putative fatty acid elongase 2 (365 aa).

The Lumenal portion of the chain corresponds to 1 to 68 (MPDSPTLHHN…SFEFIVNKTR (68 aa)). N-linked (GlcNAc...) asparagine glycans are attached at residues Asn-17 and Asn-65. A helical transmembrane segment spans residues 69 to 89 (FSSAPVVATIIISYYLLILVG). Over 90-111 (GRIMRNRQPIRLQKIFQYYNLT) the chain is Cytoplasmic. A helical transmembrane segment spans residues 112 to 132 (FSIASAILALLIFEQVAPAIY). At 133-149 (KHGFFFSICNEKAWTQP) the chain is on the lumenal side. A helical transmembrane segment spans residues 150-170 (LVFLYYCAYISKFLELTDTFF). Over 171 to 179 (LVLRKKPLQ) the chain is Cytoplasmic. Residues 180 to 198 (FLHCYHHGATAVLVYTQIV) traverse the membrane as a helical segment. Residues 199 to 204 (GRTSIS) lie on the Lumenal side of the membrane. Residues 205–225 (WLIIEINLLVHVTMYYYYYLV) traverse the membrane as a helical segment. At 226 to 241 (AKGIRVPWKKWVTRFQ) the chain is on the cytoplasmic side. A helical membrane pass occupies residues 242 to 262 (IVQFFADLGFIYFAVYTEVAY). The Lumenal segment spans residues 263 to 278 (RLKFYKACMGHCSGHP). The chain crosses the membrane as a helical span at residues 279-299 (LAAFCGLATISSYLVLFIVFY). Over 300 to 365 (HNTYKKNAAL…PISSGLNNEK (66 aa)) the chain is Cytoplasmic.

Belongs to the ELO family.

It localises to the endoplasmic reticulum membrane. It carries out the reaction a very-long-chain acyl-CoA + malonyl-CoA + H(+) = a very-long-chain 3-oxoacyl-CoA + CO2 + CoA. In terms of biological role, may be involved in the synthesis of very long chain fatty acids. The protein is Putative fatty acid elongase 2 of Schizosaccharomyces pombe (strain 972 / ATCC 24843) (Fission yeast).